A 152-amino-acid chain; its full sequence is DNA-binding transcriptional activator DecR (152 aa).

One can recognise an HTH asnC-type domain in the interval 2–63 (LDKIDRKLLA…LLDPEKIGLG (62 aa)). Positions 21–40 (LQALAEAVNLTTTPCWKRLK) form a DNA-binding region, H-T-H motif.

Functionally, plays a role in L-cysteine detoxification. Binds to the dlsT(yhaO)-yhaM operon promoter in the presence but not absence of L-cysteine; activates transcription from the dlsT(yhaO)-yhaM operon. This Escherichia coli O157:H7 protein is DNA-binding transcriptional activator DecR (decR).